The primary structure comprises 204 residues: Transcription initiation factor TFIID subunit 11b (204 aa).

The tract at residues 38–60 is disordered; that stretch reads PFEAAMEEQEESPVETEQTLEGD. Residues 42–58 are compositionally biased toward acidic residues; the sequence is AMEEQEESPVETEQTLE. The Histone-fold domain maps to 106 to 195; it reads FTEEQMSRYE…RRLKLQGKVP (90 aa).

Belongs to the TAF11 family. As to quaternary structure, component of the TFIID complex. TFIID is composed of TATA binding protein (TBP) and a number of TBP-associated factors (TAFs) whose MWs range from 14-217 kDa. In terms of tissue distribution, expressed in roots, leaves and inflorescences.

Its subcellular location is the nucleus. TAFs are components of the transcription factor IID (TFIID) complex that is essential for mediating regulation of RNA polymerase transcription. This Arabidopsis thaliana (Mouse-ear cress) protein is Transcription initiation factor TFIID subunit 11b (TAF11B).